We begin with the raw amino-acid sequence, 365 residues long: MQNSLPTQTYQSQLNEKTERLQKMMAPFNAPNVEVFSSPEQHYRMRAEFRIWHEQDALYHIMFDQETKQRIRVDQFPVASQLINQMMVALLAEIKDKPTLRHKLFQIDYLSTLSNKIIVSLLYHKKIDETWQQEATALRQTLIAQGFDVQLIGRAYKTKIMLDNDFVDEVLPVAGQQMIYRQVENSFTQPNAQVNIKMLEWALSVTENSTGDLLELYCGNGNFSLALARNFKRVLATEIAKPSVHAAQYNIAMNHIDNVKIIRMSAEDFTQAMNGVREFKRLEGINLQDYQCETIFVDPPRSGLDEKTVELVKNYSRILYISCNPQTLCQNLETLIKTHKISKLALFDQFPYTHHMECGVLLEKR.

Gln-189, Tyr-217, Asn-222, Glu-238, and Asp-298 together coordinate S-adenosyl-L-methionine. Cys-323 acts as the Nucleophile in catalysis. Residue Glu-357 is the Proton acceptor of the active site.

The protein belongs to the class I-like SAM-binding methyltransferase superfamily. RNA M5U methyltransferase family. TrmA subfamily.

The catalysed reaction is uridine(54) in tRNA + S-adenosyl-L-methionine = 5-methyluridine(54) in tRNA + S-adenosyl-L-homocysteine + H(+). It catalyses the reaction uridine(341) in tmRNA + S-adenosyl-L-methionine = 5-methyluridine(341) in tmRNA + S-adenosyl-L-homocysteine + H(+). Dual-specificity methyltransferase that catalyzes the formation of 5-methyluridine at position 54 (m5U54) in all tRNAs, and that of position 341 (m5U341) in tmRNA (transfer-mRNA). The chain is tRNA/tmRNA (uracil-C(5))-methyltransferase from Proteus mirabilis (strain HI4320).